The primary structure comprises 93 residues: Putative regulatory protein LBL_1834 (93 aa).

This sequence belongs to the RemA family.

In Leptospira borgpetersenii serovar Hardjo-bovis (strain L550), this protein is Putative regulatory protein LBL_1834.